The chain runs to 152 residues: Deoxyuridine 5'-triphosphate nucleotidohydrolase (152 aa).

Residues 62–64 (RSG), Asn-75, and 79–81 (TVD) contribute to the substrate site.

It belongs to the dUTPase family. Requires Mg(2+) as cofactor.

It catalyses the reaction dUTP + H2O = dUMP + diphosphate + H(+). It functions in the pathway pyrimidine metabolism; dUMP biosynthesis; dUMP from dCTP (dUTP route): step 2/2. In terms of biological role, this enzyme is involved in nucleotide metabolism: it produces dUMP, the immediate precursor of thymidine nucleotides and it decreases the intracellular concentration of dUTP so that uracil cannot be incorporated into DNA. This is Deoxyuridine 5'-triphosphate nucleotidohydrolase from Leifsonia xyli subsp. xyli (strain CTCB07).